Consider the following 418-residue polypeptide: Light-independent protochlorophyllide reductase subunit N (418 aa).

C17, C42, and C103 together coordinate [4Fe-4S] cluster.

Belongs to the BchN/ChlN family. As to quaternary structure, protochlorophyllide reductase is composed of three subunits; ChlL, ChlN and ChlB. Forms a heterotetramer of two ChlB and two ChlN subunits. [4Fe-4S] cluster serves as cofactor.

It carries out the reaction chlorophyllide a + oxidized 2[4Fe-4S]-[ferredoxin] + 2 ADP + 2 phosphate = protochlorophyllide a + reduced 2[4Fe-4S]-[ferredoxin] + 2 ATP + 2 H2O. Its pathway is porphyrin-containing compound metabolism; chlorophyll biosynthesis (light-independent). Functionally, component of the dark-operative protochlorophyllide reductase (DPOR) that uses Mg-ATP and reduced ferredoxin to reduce ring D of protochlorophyllide (Pchlide) to form chlorophyllide a (Chlide). This reaction is light-independent. The NB-protein (ChlN-ChlB) is the catalytic component of the complex. The chain is Light-independent protochlorophyllide reductase subunit N from Prochlorococcus marinus (strain MIT 9313).